The following is a 210-amino-acid chain: CLAVATA3/ESR (CLE)-related protein 4D (210 aa).

An N-terminal signal peptide occupies residues 1–21 (MAKNAMLCLLILSVVLALAFA). The segment at 21 to 83 (ATNKKDDEEP…SNQLPNNNWM (63 aa)) is required for secretion from the host cytoplasm to the host apoplasm. N-linked (GlcNAc...) asparagine glycans are attached at residues asparagine 32 and asparagine 59. The tract at residues 115–210 (RRKTGTHSQR…APAGPDPIHH (96 aa)) is disordered. 4 stretches are compositionally biased toward basic and acidic residues: residues 125-137 (HHEETTLEQEKRG), 144-158 (PIHHQDTTFEQEKRG), 165-179 (PIHHQDTTLEQEKRV), and 186-200 (PIHHQDTKFEQEKRG). The stretch at 127–135 (EETTLEQEK) is one A-1 repeat. The tract at residues 129–198 (TTLEQEKRGA…HQDTKFEQEK (70 aa)) is 4 X approximate repeat A. A CLE-1 repeat occupies 136–147 (RGAPAGPDPIHH). Positions 136 to 210 (RGAPAGPDPI…APAGPDPIHH (75 aa)) are 4 X approximate repeat CLE. An A-2 repeat occupies 148-156 (QDTTFEQEK). The stretch at 157–168 (RGAPAGPDPIHH) is one CLE-2 repeat. The A-3 repeat unit spans residues 169–177 (QDTTLEQEK). Residues 178–189 (RVAGAGPDPIHH) form a CLE-3 repeat. Residues 190-198 (QDTKFEQEK) form an A-4 repeat. Residues 199–210 (RGAPAGPDPIHH) form a CLE-4 repeat.

This sequence belongs to the CLV3/ESR signal peptide family. In terms of tissue distribution, highly expressed exclusively within the dorsal esophageal gland cell during syncytium formation in host plants.

The protein localises to the secreted. The protein resides in the host cytoplasm. Its subcellular location is the host extracellular space. It localises to the extracellular space. It is found in the apoplast. Its function is as follows. Mimics host plant CLE extracellular signal peptides that regulate cell fate. May play a role in the differentiation or division of feeding cells (syncytia) induced in plant roots during infection. This is CLAVATA3/ESR (CLE)-related protein 4D (CLE-4D) from Globodera rostochiensis (Golden nematode worm).